The following is a 194-amino-acid chain: Ribose 1,5-bisphosphate phosphokinase PhnN (194 aa).

24-31 contributes to the ATP binding site; sequence GPSGAGKD.

Belongs to the ribose 1,5-bisphosphokinase family.

It carries out the reaction alpha-D-ribose 1,5-bisphosphate + ATP = 5-phospho-alpha-D-ribose 1-diphosphate + ADP. It functions in the pathway metabolic intermediate biosynthesis; 5-phospho-alpha-D-ribose 1-diphosphate biosynthesis; 5-phospho-alpha-D-ribose 1-diphosphate from D-ribose 5-phosphate (route II): step 3/3. Its function is as follows. Catalyzes the phosphorylation of ribose 1,5-bisphosphate to 5-phospho-D-ribosyl alpha-1-diphosphate (PRPP). The chain is Ribose 1,5-bisphosphate phosphokinase PhnN from Rhodopseudomonas palustris (strain ATCC BAA-98 / CGA009).